The following is a 423-amino-acid chain: Endoplasmic reticulum junction formation protein lunapark (423 aa).

Topologically, residues 1–45 (MGALLAKWRAKPSTVEVLEKMEKDIQSLEEFRDKNQKLRKIWVAR) are cytoplasmic. A coiled-coil region spans residues 16–40 (EVLEKMEKDIQSLEEFRDKNQKLRK). A helical transmembrane segment spans residues 46 to 66 (LFFYSTILYILTSLTVYLWYL). Residues 67-77 (PDGMTARLLTM) are Lumenal-facing. A helical transmembrane segment spans residues 78–98 (LLFLSFPVLIWFVRTLLILWF). Residues 99-423 (SRRTERNNDA…ETEESFMETE (325 aa)) are Cytoplasmic-facing. A coiled-coil region spans residues 101-128 (RTERNNDALELLKTEKKKILEEVMEKET). The tract at residues 147–169 (KELELPVPGPPITPRPGQDLRQR) is disordered. The residue at position 159 (Thr159) is a Phosphothreonine. A phosphoserine mark is found at Ser177, Ser179, and Ser188. Residue Thr198 is modified to Phosphothreonine. The interval 200 to 247 (SLQRDTSAPGGPPERSVQPTPQSNILQRRPGSPATTVSGMAIHPPGPP) is disordered. Phosphoserine is present on residues Ser206 and Ser215. The span at 216–225 (VQPTPQSNIL) shows a compositional bias: polar residues. At Thr219 the chain carries Phosphothreonine. A phosphoserine mark is found at Ser222 and Ser231. The C4-type; plays a role in ER morphology zinc-finger motif lies at 280–305 (CQQCFSHNGMALKEEFEYVAFRCAYC). A disordered region spans residues 318–423 (APRLQEINFD…ETEESFMETE (106 aa)). Over residues 334–343 (DSQGSVSSVQ) the composition is skewed to polar residues. Composition is skewed to acidic residues over residues 370 to 391 (QAIE…DDSE) and 414 to 423 (ETEESFMETE).

The protein belongs to the lunapark family. Homodimer; homodimerization requires the C4-type zinc finger motif and decreases during mitosis in a phosphorylation-dependent manner. In terms of processing, phosphorylated. Phosphorylation at Thr-159 occurs during interphase. Phosphorylation at Ser-177, Ser-179, Ser-188, Thr-198, Ser-206, Ser-215, Thr-219, Ser-222 and Ser-231 occurs during mitosis; these phosphorylations reduce both its homodimerization and the ER three-way tubular junction formation.

Its subcellular location is the endoplasmic reticulum membrane. Its function is as follows. Endoplasmic reticulum (ER)-shaping membrane protein that plays a role in determining ER morphology. Involved in the stabilization of nascent three-way ER tubular junctions within the ER network. May also play a role as a curvature-stabilizing protein within three-way ER tubular junction network. This Xenopus tropicalis (Western clawed frog) protein is Endoplasmic reticulum junction formation protein lunapark (lnpk).